The primary structure comprises 103 residues: Large ribosomal subunit protein bL21 (103 aa).

This sequence belongs to the bacterial ribosomal protein bL21 family. Part of the 50S ribosomal subunit. Contacts protein L20.

In terms of biological role, this protein binds to 23S rRNA in the presence of protein L20. In Haemophilus influenzae (strain 86-028NP), this protein is Large ribosomal subunit protein bL21.